The primary structure comprises 356 residues: MPKVLALETSCDESAAAVVQHSAGGLEVLAHRIASQVEEHAQWGGVVPEIASRRHVEALPHLISAVLDEAGLAVGEMDAVAATVTPGLVGALMVGSLTGRTLAALHHKPFLGVHHLEAHLASVRLASSPPEAPYVVLLVSGGHTELILVDSDSGLQRLGRSHDDAAGEAFDKVARLLGLAYPGGPAIQAAAKAGDPKRFSLPKGRVSRPEGGFYPYDFSFSGLKTAMLRQVESLKAQSDALPLEDLAASFEQIVVDVLVERSLRCCLDRGLSTLVMVGGVAANVRLRVQMEQQGRERGVSVHLAPLAYCTDNAAMVGAAALGRLQAGWGSSSIRLGVSARWPLEAGGDLYAQDPQF.

2 residues coordinate Fe cation: His-115 and His-119. Substrate is bound by residues 138 to 142 (LVSGG), Asp-171, Gly-184, and Asn-283. Asp-311 provides a ligand contact to Fe cation.

The protein belongs to the KAE1 / TsaD family. It depends on Fe(2+) as a cofactor.

The protein localises to the cytoplasm. It carries out the reaction L-threonylcarbamoyladenylate + adenosine(37) in tRNA = N(6)-L-threonylcarbamoyladenosine(37) in tRNA + AMP + H(+). Required for the formation of a threonylcarbamoyl group on adenosine at position 37 (t(6)A37) in tRNAs that read codons beginning with adenine. Is involved in the transfer of the threonylcarbamoyl moiety of threonylcarbamoyl-AMP (TC-AMP) to the N6 group of A37, together with TsaE and TsaB. TsaD likely plays a direct catalytic role in this reaction. The protein is tRNA N6-adenosine threonylcarbamoyltransferase of Synechococcus sp. (strain WH7803).